The primary structure comprises 470 residues: Ras-like GTPase HI_1637 (470 aa).

Residues 27–34 carry the Walker A motif motif; that stretch reads GLSRSGKT. The GTP site is built by Ser29, Gly32, Lys33, Thr34, Ala35, Trp98, Ser101, Thr102, Arg103, Lys342, Asp344, and His345. Gly32, Lys33, Thr34, Ala35, Trp98, Ser101, and Thr102 together coordinate GDP. Residues Lys342, Asp344, His345, Ala383, and Val384 each coordinate GDP. A GTP-binding site is contributed by Val384.

It to E.coli YcjX. Monomer in solution. The cofactor is Mg(2+).

It carries out the reaction GTP + H2O = GDP + phosphate + H(+). Alternates between an inactive form bound to GDP and an active form bound to GTP. Likely activated by a guanine nucleotide-exchange factor (GEF). In terms of biological role, binds GTP and GDP. Has intrinsic GTPase activity. Does not hydrolyze ATP. May act as a transducer of stress responses. This chain is Ras-like GTPase HI_1637, found in Haemophilus influenzae (strain ATCC 51907 / DSM 11121 / KW20 / Rd).